We begin with the raw amino-acid sequence, 112 residues long: Tyrosine-protein phosphatase 7 (112 aa).

One can recognise a Tyrosine-protein phosphatase domain in the interval 1–112; the sequence is NNVTIIVMIT…SSPESGPIVV (112 aa). Asp-82 serves as a coordination point for substrate.

The protein belongs to the protein-tyrosine phosphatase family.

The enzyme catalyses O-phospho-L-tyrosyl-[protein] + H2O = L-tyrosyl-[protein] + phosphate. This chain is Tyrosine-protein phosphatase 7 (STY-7), found in Styela plicata (Wrinkled sea squirt).